We begin with the raw amino-acid sequence, 661 residues long: Heme transporter BhuA (661 aa).

The first 23 residues, 1–23 (MKFTRTLVLASTSLLATVATSQA), serve as a signal peptide directing secretion. One can recognise a TBDR plug domain in the interval 48 to 159 (KDNIEATGGT…AAGAIRYETV (112 aa)). Residues 170 to 661 (TFGARIIGSY…TFTFQTAFKF (492 aa)) enclose the TBDR beta-barrel domain.

This sequence belongs to the TonB-dependent receptor family.

The protein localises to the cell outer membrane. Heme transporter. The polypeptide is Heme transporter BhuA (bhuA) (Brucella ovis (strain ATCC 25840 / 63/290 / NCTC 10512)).